A 305-amino-acid polypeptide reads, in one-letter code: Glycine--tRNA ligase alpha subunit (305 aa).

The protein belongs to the class-II aminoacyl-tRNA synthetase family. In terms of assembly, tetramer of two alpha and two beta subunits.

It is found in the cytoplasm. It catalyses the reaction tRNA(Gly) + glycine + ATP = glycyl-tRNA(Gly) + AMP + diphosphate. This Streptococcus pneumoniae serotype 19F (strain G54) protein is Glycine--tRNA ligase alpha subunit.